Here is a 104-residue protein sequence, read N- to C-terminus: Defensin-2 (104 aa).

A signal peptide spans methionine 1–alanine 19. Intrachain disulfides connect cysteine 64–cysteine 95, cysteine 81–cysteine 100, and cysteine 85–cysteine 102.

The protein belongs to the invertebrate defensin family. Type 1 subfamily. Low expression in head and thorax.

It localises to the secreted. In terms of biological role, antibacterial peptide mostly active against Gram-positive bacteria. This chain is Defensin-2, found in Apis mellifera (Honeybee).